Consider the following 128-residue polypeptide: Cytochrome b (128 aa).

A run of 3 helical transmembrane segments spans residues 25–45 (FGSM…FLAI), 69–90 (WIMQ…YIHI), and 105–125 (WLSG…XMCY). Histidine 75 and histidine 89 together coordinate heme b. An a ubiquinone-binding site is contributed by histidine 126.

Belongs to the cytochrome b family. In terms of assembly, the cytochrome bc1 complex contains 3 respiratory subunits (MT-CYB, CYC1 and UQCRFS1), 2 core proteins (UQCRC1 and UQCRC2) and probably 6 low-molecular weight proteins. The cofactor is heme b.

It localises to the mitochondrion inner membrane. In terms of biological role, component of the ubiquinol-cytochrome c reductase complex (complex III or cytochrome b-c1 complex) that is part of the mitochondrial respiratory chain. The b-c1 complex mediates electron transfer from ubiquinol to cytochrome c. Contributes to the generation of a proton gradient across the mitochondrial membrane that is then used for ATP synthesis. This Crotalus viridis viridis (Prairie rattlesnake) protein is Cytochrome b (MT-CYB).